The sequence spans 425 residues: Enolase (425 aa).

(2R)-2-phosphoglycerate is bound at residue Gln-163. Glu-205 (proton donor) is an active-site residue. Asp-242, Glu-285, and Asp-312 together coordinate Mg(2+). (2R)-2-phosphoglycerate-binding residues include Lys-337, Arg-366, Ser-367, and Lys-388. The Proton acceptor role is filled by Lys-337.

It belongs to the enolase family. It depends on Mg(2+) as a cofactor.

It is found in the cytoplasm. Its subcellular location is the secreted. It localises to the cell surface. The enzyme catalyses (2R)-2-phosphoglycerate = phosphoenolpyruvate + H2O. It functions in the pathway carbohydrate degradation; glycolysis; pyruvate from D-glyceraldehyde 3-phosphate: step 4/5. Catalyzes the reversible conversion of 2-phosphoglycerate (2-PG) into phosphoenolpyruvate (PEP). It is essential for the degradation of carbohydrates via glycolysis. This is Enolase from Ruegeria pomeroyi (strain ATCC 700808 / DSM 15171 / DSS-3) (Silicibacter pomeroyi).